A 745-amino-acid polypeptide reads, in one-letter code: 1,4-alpha-glucan branching enzyme GlgB (745 aa).

The active-site Nucleophile is aspartate 416. Glutamate 469 functions as the Proton donor in the catalytic mechanism.

It belongs to the glycosyl hydrolase 13 family. GlgB subfamily. In terms of assembly, monomer.

The catalysed reaction is Transfers a segment of a (1-&gt;4)-alpha-D-glucan chain to a primary hydroxy group in a similar glucan chain.. It participates in glycan biosynthesis; glycogen biosynthesis. In terms of biological role, catalyzes the formation of the alpha-1,6-glucosidic linkages in glycogen by scission of a 1,4-alpha-linked oligosaccharide from growing alpha-1,4-glucan chains and the subsequent attachment of the oligosaccharide to the alpha-1,6 position. This chain is 1,4-alpha-glucan branching enzyme GlgB, found in Shewanella sp. (strain MR-4).